We begin with the raw amino-acid sequence, 324 residues long: Acetyl-coenzyme A carboxylase carboxyl transferase subunit alpha (324 aa).

A CoA carboxyltransferase C-terminal domain is found at lysine 37 to arginine 291.

The protein belongs to the AccA family. As to quaternary structure, acetyl-CoA carboxylase is a heterohexamer composed of biotin carboxyl carrier protein (AccB), biotin carboxylase (AccC) and two subunits each of ACCase subunit alpha (AccA) and ACCase subunit beta (AccD).

The protein localises to the cytoplasm. It carries out the reaction N(6)-carboxybiotinyl-L-lysyl-[protein] + acetyl-CoA = N(6)-biotinyl-L-lysyl-[protein] + malonyl-CoA. It functions in the pathway lipid metabolism; malonyl-CoA biosynthesis; malonyl-CoA from acetyl-CoA: step 1/1. Functionally, component of the acetyl coenzyme A carboxylase (ACC) complex. First, biotin carboxylase catalyzes the carboxylation of biotin on its carrier protein (BCCP) and then the CO(2) group is transferred by the carboxyltransferase to acetyl-CoA to form malonyl-CoA. The polypeptide is Acetyl-coenzyme A carboxylase carboxyl transferase subunit alpha (Chlamydia caviae (strain ATCC VR-813 / DSM 19441 / 03DC25 / GPIC) (Chlamydophila caviae)).